The primary structure comprises 491 residues: Protein translocase subunit SecY (491 aa).

Over 1-20 the chain is Cytoplasmic; the sequence is MGWKEAAAPVLTRMPAVERP. A helical membrane pass occupies residues 21–47; it reads EGHVPFRRKMYWTGGVLVLYFFLTNVP. Residues 48-58 are Extracellular-facing; sequence LWGIQTAGNDF. Residues 59-66 constitute an intramembrane region (helical); that stretch reads FGQFRSLL. A discontinuously helical membrane pass occupies residues 59-87; sequence FGQFRSLLAGGQGTVLQLGIGPIVTASIV. An intramembrane segment occupies 67-78; sequence AGGQGTVLQLGI. Residues 79-87 constitute an intramembrane region (helical); it reads GPIVTASIV. Topologically, residues 88–109 are cytoplasmic; that stretch reads LQLLGGANLLGLDTDNDPRDQA. The chain crosses the membrane as a helical span at residues 110-134; the sequence is IYQGLQKFLVGVMVVLTGAPMVFLG. The Extracellular segment spans residues 135-152; sequence NFLQPSQQLAQSMPGGAF. A helical transmembrane segment spans residues 153–177; sequence GVEVLIFAQIAAGGILLLFMDEVIS. Topologically, residues 178–183 are cytoplasmic; that stretch reads KWGVGS. A helical membrane pass occupies residues 184–202; sequence GIGLFIVAGVSQSLVGGLV. Residues 203-244 are Extracellular-facing; that stretch reads FWEGGVGSQGLLPTWFDIIVGNVSNMPPLLSGSGIEFLLMQA. Residues 245-266 traverse the membrane as a helical segment; sequence GILGLLTTLFIYVVVVYAESVR. Over 267 to 291 the chain is Cytoplasmic; that stretch reads VEIPLSHARVKGARGRFPVKLIYAS. Residues 292 to 313 traverse the membrane as a helical segment; the sequence is VLPMILVRALQANIQFLGQILN. Residues 314–365 lie on the Extracellular side of the membrane; it reads STLASMPTWLGVYGGNGQVTGGLFYYLAPIYSPNAWMWWTSGATAARWQVLI. A helical membrane pass occupies residues 366-385; sequence RIAIDLSFMIIGGAIFAIFW. Over 386–428 the chain is Cytoplasmic; the sequence is VETADMGPDATARQIQNSGMQIPGFRKNQGVIEKVMERYIPQV. Residues 429 to 447 traverse the membrane as a helical segment; it reads TVIGGALVGLLAVMANMLG. Over 448–452 the chain is Extracellular; the sequence is TIGNV. Residues 453-467 traverse the membrane as a helical segment; it reads SGTGLLLTISITYKL. Topologically, residues 468–491 are cytoplasmic; the sequence is YEEIAEEQMMEMHPMMREMFGGGD.

Belongs to the SecY/SEC61-alpha family. As to quaternary structure, component of the Sec protein translocase complex. Heterotrimer consisting of alpha (SecY), beta (SecG) and gamma (SecE) subunits. The heterotrimers can form oligomers, although 1 heterotrimer is thought to be able to translocate proteins. Interacts with the ribosome. May interact with SecDF, and other proteins may be involved.

It is found in the cell membrane. Its function is as follows. The central subunit of the protein translocation channel SecYEG. Consists of two halves formed by TMs 1-5 and 6-10. These two domains form a lateral gate at the front which open onto the bilayer between TMs 2 and 7, and are clamped together by SecE at the back. The channel is closed by both a pore ring composed of hydrophobic SecY resides and a short helix (helix 2A) on the extracellular side of the membrane which forms a plug. The plug probably moves laterally to allow the channel to open. The ring and the pore may move independently. The protein is Protein translocase subunit SecY of Halobacterium salinarum (strain ATCC 700922 / JCM 11081 / NRC-1) (Halobacterium halobium).